A 511-amino-acid chain; its full sequence is MAPRPRKRVSRPKPRATSRGRGGGDEDPFFESEPKRRRGGGRDEDIESEDSDLEGVAAAAAGGVGDDGEEEEEEEEEQETAGEKKMRIAKELLKKVTDAARRRREDDEDEDEGEEAGRRRVADILLKRQFEESGRKRMELADRILQPDPEDGFKMLVKHRQPVTAVVLSKDSDKGFSASKDGVIVHWDVETGKSEKYLWPSENVLVSHHAKPPLSAKRSKQVLALAVSADGRYLASGGLDRHIHLWDVRSREHIQAFSGHRGAISCLSFGPDSSELFSGSFDRKIMQWNAEDRTYMNCLFGHQNEVLTMDALSKDRLLTVARDRTMHLWKIPEESQLLFRAPATASLECCCFIDDKEFLTGSDDGSVELWSIMRKKPTHIIRNAHPVFRNNLNSLENNVEENGIHKPESVSSAQSWVSAIAARRGSDLAASGAANGSVRLWAIEPDSKGIRPLFSLRLDGFVNSLAIPKSGRFIVAGVGQEPRLGRWGRVRSAQNGVVIHPIRLKEESEDL.

Residues 1–18 (MAPRPRKRVSRPKPRATS) show a composition bias toward basic residues. Residues 1–117 (MAPRPRKRVS…EDEDEGEEAG (117 aa)) are disordered. Acidic residues-rich tracts occupy residues 44–53 (EDIESEDSDL) and 66–80 (DDGE…EQET). A compositionally biased stretch (basic and acidic residues) spans 81–105 (AGEKKMRIAKELLKKVTDAARRRRE). WD repeat units lie at residues 158–197 (KHRQ…SEKY), 217–256 (KRSK…HIQA), 259–298 (GHRG…YMNC), 301–339 (GHQN…QLLF), 342–380 (PATA…PTHI), 412–451 (SAQS…KGIR), and 457–497 (RLDG…QNGV).

The protein belongs to the WD repeat RRP9 family.

It localises to the nucleus. The protein resides in the nucleolus. Component of a nucleolar small nuclear ribonucleoprotein particle (snoRNP) thought to participate in the processing and modification of pre-ribosomal RNA. Essential for embryogenesis. The protein is U3 snoRNP-associated protein-like YAOH of Oryza sativa subsp. japonica (Rice).